Reading from the N-terminus, the 368-residue chain is UDP-N-acetylglucosamine--N-acetylmuramyl-(pentapeptide) pyrophosphoryl-undecaprenol N-acetylglucosamine transferase (368 aa).

Residues 10-12, asparagine 126, serine 200, isoleucine 255, and glutamine 300 each bind UDP-N-acetyl-alpha-D-glucosamine; that span reads TGG.

This sequence belongs to the glycosyltransferase 28 family. MurG subfamily.

The protein localises to the cell membrane. The catalysed reaction is Mur2Ac(oyl-L-Ala-gamma-D-Glu-L-Lys-D-Ala-D-Ala)-di-trans,octa-cis-undecaprenyl diphosphate + UDP-N-acetyl-alpha-D-glucosamine = beta-D-GlcNAc-(1-&gt;4)-Mur2Ac(oyl-L-Ala-gamma-D-Glu-L-Lys-D-Ala-D-Ala)-di-trans,octa-cis-undecaprenyl diphosphate + UDP + H(+). The protein operates within cell wall biogenesis; peptidoglycan biosynthesis. Cell wall formation. Catalyzes the transfer of a GlcNAc subunit on undecaprenyl-pyrophosphoryl-MurNAc-pentapeptide (lipid intermediate I) to form undecaprenyl-pyrophosphoryl-MurNAc-(pentapeptide)GlcNAc (lipid intermediate II). This Lactobacillus helveticus (strain DPC 4571) protein is UDP-N-acetylglucosamine--N-acetylmuramyl-(pentapeptide) pyrophosphoryl-undecaprenol N-acetylglucosamine transferase.